The primary structure comprises 38 residues: Photosystem II reaction center protein M (38 aa).

A helical membrane pass occupies residues 5–25 (ILGLIATALFIVIPTSFLLIL).

Belongs to the PsbM family. In terms of assembly, PSII is composed of 1 copy each of membrane proteins PsbA, PsbB, PsbC, PsbD, PsbE, PsbF, PsbH, PsbI, PsbJ, PsbK, PsbL, PsbM, PsbT, PsbX, PsbY, PsbZ, Psb30/Ycf12, at least 3 peripheral proteins of the oxygen-evolving complex and a large number of cofactors. It forms dimeric complexes.

It localises to the plastid. The protein localises to the cyanelle thylakoid membrane. Its function is as follows. One of the components of the core complex of photosystem II (PSII). PSII is a light-driven water:plastoquinone oxidoreductase that uses light energy to abstract electrons from H(2)O, generating O(2) and a proton gradient subsequently used for ATP formation. It consists of a core antenna complex that captures photons, and an electron transfer chain that converts photonic excitation into a charge separation. This subunit is found at the monomer-monomer interface. This is Photosystem II reaction center protein M from Cyanophora paradoxa.